The primary structure comprises 967 residues: Sulfite dehydrogenase subunit A (967 aa).

The 4Fe-4S Mo/W bis-MGD-type domain occupies V15 to G71. [4Fe-4S] cluster is bound by residues C22, C25, C29, and C57.

This sequence belongs to the prokaryotic molybdopterin-containing oxidoreductase family. In terms of assembly, forms a heterotrimeric membrane-bound complex composed of a catalytic heterodimer (SoeAB) and a membrane anchor protein (SoeC). It depends on [4Fe-4S] cluster as a cofactor. Mo-bis(molybdopterin guanine dinucleotide) is required as a cofactor.

The protein localises to the cell inner membrane. The catalysed reaction is a quinone + sulfite + H2O = a quinol + sulfate. The enzyme catalyses a menaquinone + sulfite + H2O = a menaquinol + sulfate. Functionally, part of the SoeABC complex that catalyzes the oxidation of sulfite to sulfate. The chain is Sulfite dehydrogenase subunit A from Allochromatium vinosum (strain ATCC 17899 / DSM 180 / NBRC 103801 / NCIMB 10441 / D) (Chromatium vinosum).